A 375-amino-acid polypeptide reads, in one-letter code: Dihydroorotate dehydrogenase (quinone) (375 aa).

Residues 78 to 82 (AGLDK) and T102 each bind FMN. Substrate is bound at residue K82. Residue 127-131 (NRMGF) participates in substrate binding. The FMN site is built by N159 and N192. A substrate-binding site is contributed by N192. S195 (nucleophile) is an active-site residue. Substrate is bound at residue N197. FMN is bound by residues K230 and T258. 259-260 (NT) contributes to the substrate binding site. Residues G288, G317, and 338–339 (YT) contribute to the FMN site.

Belongs to the dihydroorotate dehydrogenase family. Type 2 subfamily. In terms of assembly, monomer. The cofactor is FMN.

The protein localises to the cell membrane. It carries out the reaction (S)-dihydroorotate + a quinone = orotate + a quinol. It participates in pyrimidine metabolism; UMP biosynthesis via de novo pathway; orotate from (S)-dihydroorotate (quinone route): step 1/1. In terms of biological role, catalyzes the conversion of dihydroorotate to orotate with quinone as electron acceptor. This is Dihydroorotate dehydrogenase (quinone) from Cyanothece sp. (strain PCC 7425 / ATCC 29141).